The sequence spans 316 residues: 4-hydroxy-3-methylbut-2-enyl diphosphate reductase (316 aa).

Cys-12 is a [4Fe-4S] cluster binding site. (2E)-4-hydroxy-3-methylbut-2-enyl diphosphate contacts are provided by His-41 and His-74. Dimethylallyl diphosphate contacts are provided by His-41 and His-74. Isopentenyl diphosphate is bound by residues His-41 and His-74. Residue Cys-96 participates in [4Fe-4S] cluster binding. His-124 contacts (2E)-4-hydroxy-3-methylbut-2-enyl diphosphate. His-124 contributes to the dimethylallyl diphosphate binding site. Position 124 (His-124) interacts with isopentenyl diphosphate. Residue Glu-126 is the Proton donor of the active site. Thr-167 provides a ligand contact to (2E)-4-hydroxy-3-methylbut-2-enyl diphosphate. Cys-197 contacts [4Fe-4S] cluster. (2E)-4-hydroxy-3-methylbut-2-enyl diphosphate is bound by residues Ser-225, Ser-226, Asn-227, and Ser-269. Positions 225, 226, 227, and 269 each coordinate dimethylallyl diphosphate. Ser-225, Ser-226, Asn-227, and Ser-269 together coordinate isopentenyl diphosphate.

Belongs to the IspH family. Homodimer. [4Fe-4S] cluster is required as a cofactor.

The catalysed reaction is isopentenyl diphosphate + 2 oxidized [2Fe-2S]-[ferredoxin] + H2O = (2E)-4-hydroxy-3-methylbut-2-enyl diphosphate + 2 reduced [2Fe-2S]-[ferredoxin] + 2 H(+). It carries out the reaction dimethylallyl diphosphate + 2 oxidized [2Fe-2S]-[ferredoxin] + H2O = (2E)-4-hydroxy-3-methylbut-2-enyl diphosphate + 2 reduced [2Fe-2S]-[ferredoxin] + 2 H(+). It participates in isoprenoid biosynthesis; dimethylallyl diphosphate biosynthesis; dimethylallyl diphosphate from (2E)-4-hydroxy-3-methylbutenyl diphosphate: step 1/1. The protein operates within isoprenoid biosynthesis; isopentenyl diphosphate biosynthesis via DXP pathway; isopentenyl diphosphate from 1-deoxy-D-xylulose 5-phosphate: step 6/6. Its function is as follows. Catalyzes the conversion of 1-hydroxy-2-methyl-2-(E)-butenyl 4-diphosphate (HMBPP) into a mixture of isopentenyl diphosphate (IPP) and dimethylallyl diphosphate (DMAPP). Acts in the terminal step of the DOXP/MEP pathway for isoprenoid precursor biosynthesis. This is 4-hydroxy-3-methylbut-2-enyl diphosphate reductase from Salmonella paratyphi B (strain ATCC BAA-1250 / SPB7).